A 177-amino-acid polypeptide reads, in one-letter code: Alpha-crystallin B chain (177 aa).

Met1 bears the N-acetylmethionine mark. In terms of domain architecture, sHSP spans 58-166; it reads RMPSWAQTGL…PERSVPISRD (109 aa). The Zn(2+) site is built by His85, His106, Glu108, His113, and His121. The span at 155 to 169 shows a compositional bias: basic and acidic residues; it reads DVPERSVPISRDEKP. The disordered stretch occupies residues 155–177; that stretch reads DVPERSVPISRDEKPAVAGPQQK.

The protein belongs to the small heat shock protein (HSP20) family. In terms of assembly, heteromer composed of three CRYAA and one CRYAB subunits. Aggregates with homologous proteins, including the small heat shock protein HSPB1, to form large heteromeric complexes. Inter-subunit bridging via zinc ions enhances stability, which is crucial as there is no protein turn over in the lens. Interacts with HSPBAP1 and TTN/titin.

Functionally, may contribute to the transparency and refractive index of the lens. This Squalus acanthias (Spiny dogfish) protein is Alpha-crystallin B chain (CRYAB).